Here is a 168-residue protein sequence, read N- to C-terminus: Vasopressin-neurophysin 2-copeptin (168 aa).

Positions 1-23 (MLAMMLNTTLSACFLSLLALTSA) are cleaved as a signal peptide. A disulfide bridge connects residues Cys24 and Cys29. At Gly32 the chain carries Glycine amide. 7 disulfide bridges follow: Cys45–Cys89, Cys48–Cys62, Cys56–Cys79, Cys63–Cys69, Cys96–Cys108, Cys102–Cys120, and Cys109–Cys114. An N-linked (GlcNAc...) asparagine glycan is attached at Asn135.

It belongs to the vasopressin/oxytocin family. In terms of assembly, interacts with vasopressin receptors V1bR/AVPR1B (Ki=85 pM), V1aR/AVPR1A (Ki=0.6 nM) and V2R/AVPR2 (Ki=4.9 nM). Interacts with oxytocin receptor (OXTR) (Ki=110 nM).

It localises to the secreted. Neurophysin 2 specifically binds vasopressin. In terms of biological role, vasopressin has a direct antidiuretic action on the kidney, it also causes vasoconstriction of the peripheral vessels. Acts by binding to vasopressin receptors (V1bR/AVPR1B, V1aR/AVPR1A, and V2R/AVPR2). This Rattus norvegicus (Rat) protein is Vasopressin-neurophysin 2-copeptin (Avp).